We begin with the raw amino-acid sequence, 175 residues long: Large ribosomal subunit protein uL10 (175 aa).

Belongs to the universal ribosomal protein uL10 family. Part of the ribosomal stalk of the 50S ribosomal subunit. The N-terminus interacts with L11 and the large rRNA to form the base of the stalk. The C-terminus forms an elongated spine to which L12 dimers bind in a sequential fashion forming a multimeric L10(L12)X complex.

In terms of biological role, forms part of the ribosomal stalk, playing a central role in the interaction of the ribosome with GTP-bound translation factors. The protein is Large ribosomal subunit protein uL10 of Synechococcus sp. (strain CC9311).